Here is a 338-residue protein sequence, read N- to C-terminus: Ketol-acid reductoisomerase (NADP(+)) (338 aa).

The 181-residue stretch at 1–181 folds into the KARI N-terminal Rossmann domain; that stretch reads MKVFYDKDCD…GGGKAGIIET (181 aa). NADP(+) is bound by residues 24 to 27, R47, and S52; that span reads YGSQ. The active site involves H107. G133 contacts NADP(+). The KARI C-terminal knotted domain maps to 182-327; the sequence is NFREETETDL…EKLRAMMPWI (146 aa). Positions 190, 194, 226, and 230 each coordinate Mg(2+). Position 251 (S251) interacts with substrate.

Belongs to the ketol-acid reductoisomerase family. It depends on Mg(2+) as a cofactor.

It carries out the reaction (2R)-2,3-dihydroxy-3-methylbutanoate + NADP(+) = (2S)-2-acetolactate + NADPH + H(+). It catalyses the reaction (2R,3R)-2,3-dihydroxy-3-methylpentanoate + NADP(+) = (S)-2-ethyl-2-hydroxy-3-oxobutanoate + NADPH + H(+). The protein operates within amino-acid biosynthesis; L-isoleucine biosynthesis; L-isoleucine from 2-oxobutanoate: step 2/4. Its pathway is amino-acid biosynthesis; L-valine biosynthesis; L-valine from pyruvate: step 2/4. Involved in the biosynthesis of branched-chain amino acids (BCAA). Catalyzes an alkyl-migration followed by a ketol-acid reduction of (S)-2-acetolactate (S2AL) to yield (R)-2,3-dihydroxy-isovalerate. In the isomerase reaction, S2AL is rearranged via a Mg-dependent methyl migration to produce 3-hydroxy-3-methyl-2-ketobutyrate (HMKB). In the reductase reaction, this 2-ketoacid undergoes a metal-dependent reduction by NADPH to yield (R)-2,3-dihydroxy-isovalerate. This is Ketol-acid reductoisomerase (NADP(+)) from Polaromonas sp. (strain JS666 / ATCC BAA-500).